A 246-amino-acid chain; its full sequence is Probable transcriptional regulatory protein CTC_02215 (246 aa).

It belongs to the TACO1 family.

Its subcellular location is the cytoplasm. The chain is Probable transcriptional regulatory protein CTC_02215 from Clostridium tetani (strain Massachusetts / E88).